Reading from the N-terminus, the 230-residue chain is MAKKGKKYQEAASKVDRTQHYSVEEAIKLAKETSIANFDASVEVAFRLGIDTRKNDQQIRGAVVLPNGTGKSQSVLVFAKGDKIAEAEAAGADYVGEAEYVQKIQQGWFDFDVVVATPDMMGEVGKLGRVLGPKGLMPNPKTGTVTMDVKKAVEEIKAGKVEYRAEKAGIVHASIGKVSFTDEQLIENFNTLQDVLAKAKPSSAKGTYFKSVAVTTTMGPGVKIDTASFK.

The protein belongs to the universal ribosomal protein uL1 family. In terms of assembly, part of the 50S ribosomal subunit.

Functionally, binds directly to 23S rRNA. The L1 stalk is quite mobile in the ribosome, and is involved in E site tRNA release. In terms of biological role, protein L1 is also a translational repressor protein, it controls the translation of the L11 operon by binding to its mRNA. The chain is Large ribosomal subunit protein uL1 from Staphylococcus aureus (strain Mu3 / ATCC 700698).